We begin with the raw amino-acid sequence, 103 residues long: NADH-quinone oxidoreductase subunit K (103 aa).

The next 3 membrane-spanning stretches (helical) occupy residues 6–26, 30–50, and 66–86; these read IEYY…GFLL, LLVL…TLVA, and FFVI…VLAF.

It belongs to the complex I subunit 4L family. NDH-1 is composed of 14 different subunits. Subunits NuoA, H, J, K, L, M, N constitute the membrane sector of the complex.

The protein localises to the cell inner membrane. It catalyses the reaction a quinone + NADH + 5 H(+)(in) = a quinol + NAD(+) + 4 H(+)(out). In terms of biological role, NDH-1 shuttles electrons from NADH, via FMN and iron-sulfur (Fe-S) centers, to quinones in the respiratory chain. The immediate electron acceptor for the enzyme in this species is believed to be ubiquinone. Couples the redox reaction to proton translocation (for every two electrons transferred, four hydrogen ions are translocated across the cytoplasmic membrane), and thus conserves the redox energy in a proton gradient. The chain is NADH-quinone oxidoreductase subunit K from Sorangium cellulosum (strain So ce56) (Polyangium cellulosum (strain So ce56)).